The chain runs to 699 residues: LMBR1 domain-containing protein 2 homolog (699 aa).

The Extracellular segment spans residues 1 to 3 (MAY). The chain crosses the membrane as a helical span at residues 4–26 (LLTFGIIAALCLASISLYRYGNI). The Cytoplasmic portion of the chain corresponds to 27–30 (PRQH). A helical transmembrane segment spans residues 31–51 (ILVTLSVLTAWCFSFLIVFTI). Residues 52–106 (PLDVTSTLYRQCLAEHKLALDAAGNASTTANITPPPECQEPWGMVPESVFPNLWR) are Extracellular-facing. Residue N76 is glycosylated (N-linked (GlcNAc...) asparagine). A helical membrane pass occupies residues 107–127 (IIYWSSQFLTWLIMPLMQSYL). Topologically, residues 128–144 (KAGDFTIKGKLKSALIE) are cytoplasmic. The chain crosses the membrane as a helical span at residues 145 to 165 (NAIYYGSYLFICGVLLIYIAV). The Extracellular portion of the chain corresponds to 166–181 (KGVPLDWQKLKAIASS). Residues 182 to 202 (ASNTWGLFLLILLLGYALVEV) traverse the membrane as a helical segment. The Cytoplasmic portion of the chain corresponds to 203 to 381 (PRSLWNNAKP…ECLLKAPFLK (179 aa)). Residues 382-402 (TLCVVTATMSAMVVWSEVTFF) traverse the membrane as a helical segment. The Extracellular segment spans residues 403–426 (SRDPVLSIFANVIYLAKESYDFFT). The helical transmembrane segment at 427-447 (IEVFSMMVLCYFFYCTYSTIL) threads the bilayer. The Cytoplasmic portion of the chain corresponds to 448 to 467 (RIRFLNLYYLAPHHQTNEHS). The chain crosses the membrane as a helical span at residues 468–488 (LIFSGMLLCRLTPPMCLNFLG). Residues 489–514 (LIHMDSHIIPERMMETYYTRIMGHMD) lie on the Extracellular side of the membrane. Residues 515–535 (VIGIISNGFNIYFPMCMLAFC) traverse the membrane as a helical segment. Residues 536–699 (LSTWFSLGSR…PPPRGLFDDV (164 aa)) lie on the Cytoplasmic side of the membrane. The stretch at 564 to 592 (ELVQEGKDLIAREKRRRQRAEEAMARRRD) forms a coiled coil. Residues 669–699 (FRGTSELDPDYEAENERRIVGPPPRGLFDDV) form a disordered region.

Belongs to the LIMR family.

The protein resides in the membrane. The polypeptide is LMBR1 domain-containing protein 2 homolog (Drosophila pseudoobscura pseudoobscura (Fruit fly)).